Consider the following 341-residue polypeptide: Protein huluwa (341 aa).

At M1–L36 the chain is on the extracellular side. Residues L37–F57 traverse the membrane as a helical segment. Residues H58–I341 lie on the Cytoplasmic side of the membrane. The short motif at V206–P211 is the VPPNSP motif element.

Belongs to the huluwa family. In terms of assembly, interacts with axin1; leading to promote the tankyrase-mediated degradation of axin. Interacts with axin2; leading to promote the tankyrase-mediated degradation of axin.

Its subcellular location is the cell membrane. Functionally, key maternal determinant of the dorsal organizer and body axis formation in vertebrates that acts by promoting stabilization of beta-catenin (ctnnb1). Localizes on the plasma membrane of the future dorsal blastomeres in early blastulas and binds to and promotes the tankyrase-mediated degradation of axin (axin1 and axin2). Axin degradation results in stabilization and nuclear translocation of beta-catenin (ctnnb1) for activating organizer-specific target gene expression. The sequence is that of Protein huluwa from Xenopus laevis (African clawed frog).